The primary structure comprises 219 residues: Ras-like protein 1 (219 aa).

15-22 (GDGGVGKS) is a GTP binding site. The Effector region signature appears at 37 to 45 (YDPTIEDSY). Residues 62 to 66 (DTAGQ) and 121 to 124 (NKCD) each bind GTP. Residue C216 is modified to Cysteine methyl ester. A lipid anchor (S-farnesyl cysteine) is attached at C216. The propeptide at 217–219 (VIC) is removed in mature form.

The protein belongs to the small GTPase superfamily. Ras family. As to quaternary structure, scd1, scd2, cdc42, and ras1, in its GTP-bound state, act cooperatively to form a protein complex. Palmitoylated by the erf2-erf4 complex.

Its subcellular location is the cell membrane. It catalyses the reaction GTP + H2O = GDP + phosphate + H(+). Its activity is regulated as follows. Alternates between an inactive form bound to GDP and an active form bound to GTP. Activated by a guanine nucleotide-exchange factor (GEF) and inactivated by a GTPase-activating protein (GAP). In terms of biological role, participates in the process of sexual differentiation and the determination of cell shape. Essential for mating and for recognition of the mating pheromone, but not for vegetative growth. Does not regulate the intracellular cAMP level. Regulates two downstream pathways, namely the byr2/byr1/spk1 mitogen-activated protein kinase cascade and the cdc42 small G protein pathway. The former is relevant to mating and sporulation, whereas the latter is relevant to mating, cell growth and cell morphology. The protein is Ras-like protein 1 (ras1) of Schizosaccharomyces pombe (strain 972 / ATCC 24843) (Fission yeast).